The sequence spans 274 residues: Large ribosomal subunit protein uL2 (274 aa).

Disordered regions lie at residues 28–55 (APHA…RHVG) and 224–274 (VAMN…RRRK). Basic and acidic residues predominate over residues 263–274 (KRTDKMIVRRRK).

This sequence belongs to the universal ribosomal protein uL2 family. Part of the 50S ribosomal subunit. Forms a bridge to the 30S subunit in the 70S ribosome.

One of the primary rRNA binding proteins. Required for association of the 30S and 50S subunits to form the 70S ribosome, for tRNA binding and peptide bond formation. It has been suggested to have peptidyltransferase activity; this is somewhat controversial. Makes several contacts with the 16S rRNA in the 70S ribosome. The protein is Large ribosomal subunit protein uL2 of Pseudomonas fluorescens (strain ATCC BAA-477 / NRRL B-23932 / Pf-5).